The following is a 420-amino-acid chain: L-glutamine:2-deoxy-scyllo-inosose aminotransferase (420 aa).

Lys201 is modified (N6-(pyridoxal phosphate)lysine).

It belongs to the DegT/DnrJ/EryC1 family. L-glutamine:2-deoxy-scyllo-inosose/scyllo-inosose aminotransferase subfamily. Requires pyridoxal 5'-phosphate as cofactor.

It catalyses the reaction 2-deoxy-L-scyllo-inosose + L-glutamine = 2-deoxy-scyllo-inosamine + 2-oxoglutaramate. The catalysed reaction is 3-amino-2,3-dideoxy-scyllo-inosose + L-glutamine = 2-deoxystreptamine + 2-oxoglutaramate. The protein operates within metabolic intermediate biosynthesis; 2-deoxystreptamine biosynthesis; 2-deoxystreptamine from D-glucose 6-phosphate: step 2/4. It functions in the pathway antibiotic biosynthesis; gentamicin biosynthesis. Its function is as follows. Catalyzes the PLP-dependent transamination of 2-deoxy-scyllo-inosose (2-DOI) to form 2-deoxy-scyllo-inosamine (2-DOIA) using L-glutamine as the amino donor. Also catalyzes the transamination of 3-amino-2,3-dideoxy-scyllo-inosose (keto-2-DOIA) into 2-deoxystreptamine (2-DOS). This is L-glutamine:2-deoxy-scyllo-inosose aminotransferase (gntA) from Micromonospora echinospora (Micromonospora purpurea).